A 447-amino-acid polypeptide reads, in one-letter code: Cysteine--tRNA ligase (447 aa).

Cysteine 28 lines the Zn(2+) pocket. Positions 30 to 40 (PTVYNYIHIGN) match the 'HIGH' region motif. Residues cysteine 211, histidine 236, and glutamate 240 each contribute to the Zn(2+) site. The short motif at 268-272 (KMSKS) is the 'KMSKS' region element. Lysine 271 contacts ATP.

It belongs to the class-I aminoacyl-tRNA synthetase family. Monomer. It depends on Zn(2+) as a cofactor.

The protein resides in the cytoplasm. The enzyme catalyses tRNA(Cys) + L-cysteine + ATP = L-cysteinyl-tRNA(Cys) + AMP + diphosphate. The polypeptide is Cysteine--tRNA ligase (Streptococcus pyogenes serotype M18 (strain MGAS8232)).